Here is a 416-residue protein sequence, read N- to C-terminus: Transmembrane protease serine 11B-like protein (416 aa).

Over methionine 1–tryptophan 15 the chain is Cytoplasmic. A helical; Signal-anchor for type II membrane protein membrane pass occupies residues leucine 16–valine 36. Residues histidine 37–isoleucine 416 lie on the Extracellular side of the membrane. The 118-residue stretch at lysine 44–lysine 161 folds into the SEA domain. Asparagine 107 carries N-linked (GlcNAc...) asparagine glycosylation. Positions isoleucine 185–glycine 415 constitute a Peptidase S1 domain. Cysteine 210 and cysteine 226 are joined by a disulfide. The Charge relay system role is filled by histidine 225. Residue asparagine 235 is glycosylated (N-linked (GlcNAc...) asparagine). Residue aspartate 270 is the Charge relay system of the active site. 2 disulfides stabilise this stretch: cysteine 335–cysteine 351 and cysteine 362–cysteine 391. Serine 366 (charge relay system) is an active-site residue.

It belongs to the peptidase S1 family. As to expression, expressed in esophagus, cervix, tongue, and testes.

Its subcellular location is the cell membrane. With respect to regulation, inhibited by aprotinin, leupeptin, benzamidine, SERPINA1, SPINT1 and SPINT2. Functionally, serine protease. This Mus musculus (Mouse) protein is Transmembrane protease serine 11B-like protein (Tmprss11b).